Here is a 207-residue protein sequence, read N- to C-terminus: Ras-related protein Rab-8B (207 aa).

Ser17, Gly18, Val19, Gly20, Lys21, Thr22, Cys23, Thr35, Ser39, and Thr40 together coordinate GTP. Thr22 provides a ligand contact to Mg(2+). 2 short sequence motifs (switch) span residues 31-45 and 63-80; these read DAFN…GIDF and DTAG…YYRG. Positions 40 and 63 each coordinate Mg(2+). Residue Gly66 coordinates GTP. Thr72 is modified (phosphothreonine; by LRRK2). Residues Asn121, Lys122, Asp124, Ala152, and Lys153 each contribute to the GTP site. Ser180 is modified (phosphoserine). Cys204 carries the post-translational modification Cysteine methyl ester. A lipid anchor (S-geranylgeranyl cysteine) is attached at Cys204. The propeptide at 205–207 is removed in mature form; the sequence is SLL.

It belongs to the small GTPase superfamily. Rab family. As to quaternary structure, associated with actin, delta-catenin and alpha and beta tubulins. Interacts with OTOF. Interacts with PEX5R. Interacts with RAB3IP. Interacts with VIM. Interacts with CDH1. Interacts with MICALL2. Interacts with GDI1, GDI2, CHML and CHM; phosphorylation at Thr-72 disrupts these interactions. Interacts with MICAL1. Requires Mg(2+) as cofactor. Phosphorylation of Thr-72 in the switch II region by LRRK2 prevents the association of RAB regulatory proteins, including CHM, CHML and RAB GDP dissociation inhibitors GDI1 and GDI2.

It is found in the cell membrane. Its subcellular location is the cytoplasmic vesicle. The protein resides in the phagosome. The protein localises to the phagosome membrane. It localises to the endosome membrane. It catalyses the reaction GTP + H2O = GDP + phosphate + H(+). Its activity is regulated as follows. Regulated by guanine nucleotide exchange factors (GEFs) including RAB3IP/RABIN8 which promotes the exchange of bound GDP for free GTP. Regulated by GTPase activating proteins (GAPs) which increase the GTP hydrolysis activity. Inhibited by GDP dissociation inhibitors (GDIs). Functionally, the small GTPases Rab are key regulators of intracellular membrane trafficking, from the formation of transport vesicles to their fusion with membranes. Rabs cycle between an inactive GDP-bound form and an active GTP-bound form that is able to recruit to membranes different sets of downstream effectors directly responsible for vesicle formation, movement, tethering and fusion. RAB8B may be involved in polarized vesicular trafficking and neurotransmitter release. May participate in cell junction dynamics in Sertoli cells. May also participate in the export of a subset of neosynthesized proteins through a Rab8-Rab10-Rab11-dependent endososomal export route. This chain is Ras-related protein Rab-8B, found in Homo sapiens (Human).